A 519-amino-acid polypeptide reads, in one-letter code: uncharacterized protein (519 aa).

The segment covering 477–486 (IKRERAHVTQ) has biased composition (basic residues). The interval 477–519 (IKRERAHVTQRNKPPPSGGDTAVAEGFEPPDGVSRLSLSRRVH) is disordered.

This is an uncharacterized protein from Mycobacterium tuberculosis (strain ATCC 25618 / H37Rv).